The following is a 637-amino-acid chain: Chaperone protein HtpG (637 aa).

An a; substrate-binding region spans residues 1–345 (MSQQETHGFQ…SNDLPLNVSR (345 aa)). Residues 346–562 (EILQDNHVTK…EGEMSTQMIK (217 aa)) are b. The tract at residues 563-637 (LMQAAGQPVP…MNQMLLANMK (75 aa)) is c.

It belongs to the heat shock protein 90 family. In terms of assembly, homodimer.

The protein localises to the cytoplasm. Its function is as follows. Molecular chaperone. Has ATPase activity. The chain is Chaperone protein HtpG from Shewanella baltica (strain OS185).